The chain runs to 186 residues: Protein TRL14 (186 aa).

N-linked (GlcNAc...) asparagine; by host glycosylation is found at Asn24, Asn64, and Asn72. The chain crosses the membrane as a helical span at residues 143–163; that stretch reads HAVWAGVVVSVALIALYMGSH.

It belongs to the RL11 family.

The protein resides in the virion membrane. The polypeptide is Protein TRL14 (Human cytomegalovirus (strain AD169) (HHV-5)).